The primary structure comprises 223 residues: Neurotrophic factor BDNF precursor form (223 aa).

A signal peptide spans 1 to 5 (SCMKA). The propeptide occupies 6 to 114 (APMKEVSIRG…AANMSMRVRR (109 aa)). N-linked (GlcNAc...) asparagine glycosylation occurs at N107. Cystine bridges form between C127-C194 and C172-C223.

The protein belongs to the NGF-beta family.

The protein localises to the secreted. Functionally, promotes the survival of neuronal populations that are all located either in the central nervous system or directly connected to it. The polypeptide is Neurotrophic factor BDNF precursor form (BDNF) (Candoia carinata (Papuan tree boa)).